The primary structure comprises 253 residues: MALQPESPGQPASTVDPAEIAKFSKLSAEWWDPTGRMAPLHRINPLRISFIRDAACRKFERNAKSLSCLEGLRMLDIGCGAGLLCEPFTRLGAQVIGIDPSATNIAAAKLHADKSHLAIDYRNVMVEEIDPRERFDIVLAMEVIEHVTDVGAFLSRCAALMKPTGIMVVATLNRNWKSFALAIVGAEYVMRWLPRGTHQWDKFVTPAELEQHLNRLKLIVTEQSGLVFNPLADRWKLSPDMDVNYMMVAEAAP.

S-adenosyl-L-methionine contacts are provided by Arg-47, Gly-78, Asp-99, and Met-141.

It belongs to the methyltransferase superfamily. UbiG/COQ3 family.

The catalysed reaction is a 3-demethylubiquinol + S-adenosyl-L-methionine = a ubiquinol + S-adenosyl-L-homocysteine + H(+). It catalyses the reaction a 3-(all-trans-polyprenyl)benzene-1,2-diol + S-adenosyl-L-methionine = a 2-methoxy-6-(all-trans-polyprenyl)phenol + S-adenosyl-L-homocysteine + H(+). It participates in cofactor biosynthesis; ubiquinone biosynthesis. Its function is as follows. O-methyltransferase that catalyzes the 2 O-methylation steps in the ubiquinone biosynthetic pathway. The chain is Ubiquinone biosynthesis O-methyltransferase from Rhodopseudomonas palustris (strain ATCC BAA-98 / CGA009).